The sequence spans 502 residues: UPF0371 protein CLL_A2797 (502 aa).

This sequence belongs to the UPF0371 family.

The polypeptide is UPF0371 protein CLL_A2797 (Clostridium botulinum (strain Eklund 17B / Type B)).